The primary structure comprises 201 residues: MIFKYPGGKTYETKQMNKSIRPFQPNYGNRGMTLEEDLNATNEYYREHGIAVIHKKPTPVQIVRVDYPKRSAAVIKEAYFKQASTTDYNGVYRGKYIDFEAKETKNKTSFPLKNFHEHQIHHMQQVLRHGGICFVILRFTTLNEVYLLDANHLIMFWEQQRSGGRKSIPKREIERYGHYIALGYQPRIDYISVVEKVYFSH.

Mg(2+)-binding residues include T85, D87, E100, and Q119.

This sequence belongs to the RecU family. Mg(2+) is required as a cofactor.

Its subcellular location is the cytoplasm. It catalyses the reaction Endonucleolytic cleavage at a junction such as a reciprocal single-stranded crossover between two homologous DNA duplexes (Holliday junction).. Endonuclease that resolves Holliday junction intermediates in genetic recombination. Cleaves mobile four-strand junctions by introducing symmetrical nicks in paired strands. Promotes annealing of linear ssDNA with homologous dsDNA. Required for DNA repair, homologous recombination and chromosome segregation. In Geobacillus sp. (strain WCH70), this protein is Holliday junction resolvase RecU.